Consider the following 892-residue polypeptide: Translation initiation factor IF-2 (892 aa).

The interval 88–304 (KKRTFVKRDP…SSLQQGFQKP (217 aa)) is disordered. Composition is skewed to basic and acidic residues over residues 93–159 (VKRD…KDKV) and 166–216 (DMTK…EENK). The span at 254–269 (GRGRNAKAARPAKKGK) shows a compositional bias: basic residues. Basic and acidic residues predominate over residues 270–282 (HAESKADREEARA). In terms of domain architecture, tr-type G spans 391–560 (PRAPVVTIMG…LLQAEVLELK (170 aa)). The interval 400-407 (GHVDHGKT) is G1. 400–407 (GHVDHGKT) provides a ligand contact to GTP. The segment at 425–429 (GITQH) is G2. A G3 region spans residues 446–449 (DTPG). GTP contacts are provided by residues 446–450 (DTPGH) and 500–503 (NKID). The interval 500-503 (NKID) is G4. The G5 stretch occupies residues 536 to 538 (SAK).

This sequence belongs to the TRAFAC class translation factor GTPase superfamily. Classic translation factor GTPase family. IF-2 subfamily.

It is found in the cytoplasm. Functionally, one of the essential components for the initiation of protein synthesis. Protects formylmethionyl-tRNA from spontaneous hydrolysis and promotes its binding to the 30S ribosomal subunits. Also involved in the hydrolysis of GTP during the formation of the 70S ribosomal complex. This chain is Translation initiation factor IF-2, found in Salmonella choleraesuis (strain SC-B67).